Here is a 420-residue protein sequence, read N- to C-terminus: Glucose-1-phosphate adenylyltransferase (420 aa).

Alpha-D-glucose 1-phosphate-binding positions include tyrosine 107, glycine 172, 187-188, and serine 205; that span reads EK.

It belongs to the bacterial/plant glucose-1-phosphate adenylyltransferase family. In terms of assembly, homotetramer.

The catalysed reaction is alpha-D-glucose 1-phosphate + ATP + H(+) = ADP-alpha-D-glucose + diphosphate. It functions in the pathway glycan biosynthesis; glycogen biosynthesis. Functionally, involved in the biosynthesis of ADP-glucose, a building block required for the elongation reactions to produce glycogen. Catalyzes the reaction between ATP and alpha-D-glucose 1-phosphate (G1P) to produce pyrophosphate and ADP-Glc. The chain is Glucose-1-phosphate adenylyltransferase from Agrobacterium fabrum (strain C58 / ATCC 33970) (Agrobacterium tumefaciens (strain C58)).